The following is a 966-amino-acid chain: Alpha-1,4 glucan phosphorylase L-1 isozyme, chloroplastic/amyloplastic (966 aa).

The N-terminal 50 residues, 1 to 50 (MATANGAHLFNHYSSNSRFIHFTSRNTSSKLFLTKTSHFRRPKRCFHVNN), are a transit peptide targeting the chloroplast. Lys812 is modified (N6-(pyridoxal phosphate)lysine).

Belongs to the glycogen phosphorylase family. The cofactor is pyridoxal 5'-phosphate. Tuber.

It localises to the plastid. The protein localises to the chloroplast. It is found in the amyloplast. It carries out the reaction [(1-&gt;4)-alpha-D-glucosyl](n) + phosphate = [(1-&gt;4)-alpha-D-glucosyl](n-1) + alpha-D-glucose 1-phosphate. In terms of biological role, phosphorylase is an important allosteric enzyme in carbohydrate metabolism. Enzymes from different sources differ in their regulatory mechanisms and in their natural substrates. However, all known phosphorylases share catalytic and structural properties. In Solanum tuberosum (Potato), this protein is Alpha-1,4 glucan phosphorylase L-1 isozyme, chloroplastic/amyloplastic.